Consider the following 67-residue polypeptide: Large ribosomal subunit protein bL32 (67 aa).

A compositionally biased stretch (basic residues) spans M1–Q19. Residues M1–W20 form a disordered region.

Belongs to the bacterial ribosomal protein bL32 family.

This is Large ribosomal subunit protein bL32 from Paenarthrobacter aurescens (strain TC1).